Reading from the N-terminus, the 208-residue chain is Large ribosomal subunit protein uL3 (208 aa).

Positions 134 to 153 (SKFHREAGSTGQCTSPGRTF) are disordered.

The protein belongs to the universal ribosomal protein uL3 family. Part of the 50S ribosomal subunit. Forms a cluster with proteins L14 and L19.

Functionally, one of the primary rRNA binding proteins, it binds directly near the 3'-end of the 23S rRNA, where it nucleates assembly of the 50S subunit. This chain is Large ribosomal subunit protein uL3, found in Treponema pallidum (strain Nichols).